A 467-amino-acid polypeptide reads, in one-letter code: Zinc finger protein 410 (467 aa).

Disordered stretches follow at residues 84-111 (PDGE…SLLQ) and 187-214 (NAKT…PLPQ). 5 C2H2-type zinc fingers span residues 219–243 (LKCT…LKTH), 249–273 (FICP…MRTH), 279–303 (FVCP…LRIH), 309–333 (FLCE…LVVH), and 339–362 (HQCQ…RKHH). Positions 221, 226, 239, 243, 251, 256, 269, 273, 281, 286, 299, 303, 311, 316, 329, 333, 341, 344, 357, and 361 each coordinate Zn(2+).

In terms of assembly, interacts with CDKN2A/p14ARF. Post-translationally, O-glycosylated. O-GlcNAcylation may occur in response to increasing glucose levels and affect transcription factor activity. Sumoylated. Sumoylation increases its half-life, possibly by blocking ubiquitin-mediated degradation.

It is found in the nucleus. The protein resides in the chromosome. Transcription factor that binds to the sequence motif 5'-CATCCCATAATA-3', and is specifically required to silence expression of fetal hemoglobin in adult erythroid cells. Prevents expression of fetal hemoglobin genes HBG1 and HBG2 through CHD4: acts as a direct transcriptional activator of CHD4, a central component of the NuRD complex that represses transcription of fetal hemoglobin genes HBG1 and HBG2 in erythroid cells. May also activate transcription of matrix-remodeling genes such as MMP1 during fibroblast senescence. May activate transcription of the gap junction gene GJC1, perhaps in response to increasing glucose. However, recent studies suggest that ZNF410 is dedicated to regulate expression of a single gene: CHD4. The polypeptide is Zinc finger protein 410 (Bos taurus (Bovine)).